Consider the following 530-residue polypeptide: MKGNIMQLSHTELQSRKKKIAWWQSDALKWLVISLLSLFTCYLIVLMYAQGEYLFAIVTLILVSLGLYVFANRRAYAWRYVYPGVAGMGLFVLFPLICTIAIAFTNYSSTNQLTFERAQSVLLDRQFQTGKTFTFGLYPSDNQWRLQLTNPDDGSLFISEPFSFEATGEQKVMVAPTNTAQTSEPASLRIITQSRQALSSLVAILPDGAELRMSSLRQFSGTKPLYTLGADGKELINQQTGVKYWPNPSTGFYQAVNADGQWENEKLSPGFTVSIGWKNFLRVLHDEGIQKPFISIFIWTILFSVMSVTFTVAVGMVLACVVQWDSLKGKAIYRVMLILPYAVPSFISILIFKGLFNQSFGEINLMLSHLFGIKPAWFSDPITAKSMILIVNTWLGYPYMMILCMGLLKAIPDDLYEASAMDGAGPFQNFFRITFPLLIKPLTPLMIASFAFNFNNFVLIQLLTNGGPDMIGTSTPAGYTDLLVNYTYRVAFEGEGGQDFGLAAAIATLIFILVGALAILNLKASKMNFD.

Residues 1 to 26 (MKGNIMQLSHTELQSRKKKIAWWQSD) lie on the Cytoplasmic side of the membrane. Residues 27–49 (ALKWLVISLLSLFTCYLIVLMYA) form a helical membrane-spanning segment. The Periplasmic segment spans residues 50-52 (QGE). A helical membrane pass occupies residues 53-70 (YLFAIVTLILVSLGLYVF). At 71-82 (ANRRAYAWRYVY) the chain is on the cytoplasmic side. A helical membrane pass occupies residues 83–105 (PGVAGMGLFVLFPLICTIAIAFT). The Periplasmic segment spans residues 106–295 (NYSSTNQLTF…DEGIQKPFIS (190 aa)). A helical transmembrane segment spans residues 296–318 (IFIWTILFSVMSVTFTVAVGMVL). One can recognise an ABC transmembrane type-1 domain in the interval 297–521 (FIWTILFSVM…ILVGALAILN (225 aa)). At 319–330 (ACVVQWDSLKGK) the chain is on the cytoplasmic side. A helical membrane pass occupies residues 331-352 (AIYRVMLILPYAVPSFISILIF). At 353–385 (KGLFNQSFGEINLMLSHLFGIKPAWFSDPITAK) the chain is on the periplasmic side. Residues 386–408 (SMILIVNTWLGYPYMMILCMGLL) form a helical membrane-spanning segment. Residues 409-428 (KAIPDDLYEASAMDGAGPFQ) are Cytoplasmic-facing. The chain crosses the membrane as a helical span at residues 429 to 451 (NFFRITFPLLIKPLTPLMIASFA). Residues 452 to 499 (FNFNNFVLIQLLTNGGPDMIGTSTPAGYTDLLVNYTYRVAFEGEGGQD) lie on the Periplasmic side of the membrane. A helical transmembrane segment spans residues 500-522 (FGLAAAIATLIFILVGALAILNL). Residues 523–530 (KASKMNFD) lie on the Cytoplasmic side of the membrane.

Belongs to the binding-protein-dependent transport system permease family. MalFG subfamily. In terms of assembly, the complex is composed of two ATP-binding proteins (MalK), two transmembrane proteins (MalG and MalF) and a solute-binding protein (MalE).

It is found in the cell inner membrane. Its function is as follows. Part of the ABC transporter complex MalEFGK involved in maltose/maltodextrin import. Probably responsible for the translocation of the substrate across the membrane. The polypeptide is Maltose/maltodextrin transport system permease protein MalF (malF) (Yersinia pestis).